The chain runs to 196 residues: Lipoprotein signal peptidase (196 aa).

The next 3 helical transmembrane spans lie at 17 to 37 (SIII…IDNL), 73 to 93 (SNAI…YLMI), and 96 to 116 (NTIG…GNLI). Catalysis depends on residues Asp126 and Asp144. A helical transmembrane segment spans residues 135–155 (YSFPVFNLADCFITIGVIILI).

Belongs to the peptidase A8 family.

The protein localises to the cell inner membrane. It catalyses the reaction Release of signal peptides from bacterial membrane prolipoproteins. Hydrolyzes -Xaa-Yaa-Zaa-|-(S,diacylglyceryl)Cys-, in which Xaa is hydrophobic (preferably Leu), and Yaa (Ala or Ser) and Zaa (Gly or Ala) have small, neutral side chains.. The protein operates within protein modification; lipoprotein biosynthesis (signal peptide cleavage). Its function is as follows. This protein specifically catalyzes the removal of signal peptides from prolipoproteins. The protein is Lipoprotein signal peptidase of Rickettsia akari (strain Hartford).